We begin with the raw amino-acid sequence, 482 residues long: Islet cell autoantigen 1-like protein (482 aa).

An AH domain is found at 44-247; it reads ASDAELDAKL…TARMMSQIHE (204 aa). 2 disordered regions span residues 365 to 393 and 427 to 449; these read TQECQTAFGSPSASLTSQEPSMGSEPLAH and SHTDNQPVPSQSPKKLTRSPNNG. 2 stretches are compositionally biased toward polar residues: residues 366–385 and 428–449; these read QECQTAFGSPSASLTSQEPS and HTDNQPVPSQSPKKLTRSPNNG.

The protein is Islet cell autoantigen 1-like protein (ICA1L) of Homo sapiens (Human).